A 474-amino-acid polypeptide reads, in one-letter code: tRNA-2-methylthio-N(6)-dimethylallyladenosine synthase (474 aa).

Residues 3–120 (KKLHIKTWGC…LPEMIEQVRR (118 aa)) enclose the MTTase N-terminal domain. [4Fe-4S] cluster contacts are provided by cysteine 12, cysteine 49, cysteine 83, cysteine 157, cysteine 161, and cysteine 164. The Radical SAM core domain occupies 143–375 (RAEGPTAFVS…QDRITQQAMR (233 aa)). Residues 378-441 (RHMMGTVQRI…TNSLRGVFIR (64 aa)) enclose the TRAM domain.

Belongs to the methylthiotransferase family. MiaB subfamily. As to quaternary structure, monomer. It depends on [4Fe-4S] cluster as a cofactor.

It localises to the cytoplasm. The catalysed reaction is N(6)-dimethylallyladenosine(37) in tRNA + (sulfur carrier)-SH + AH2 + 2 S-adenosyl-L-methionine = 2-methylsulfanyl-N(6)-dimethylallyladenosine(37) in tRNA + (sulfur carrier)-H + 5'-deoxyadenosine + L-methionine + A + S-adenosyl-L-homocysteine + 2 H(+). Catalyzes the methylthiolation of N6-(dimethylallyl)adenosine (i(6)A), leading to the formation of 2-methylthio-N6-(dimethylallyl)adenosine (ms(2)i(6)A) at position 37 in tRNAs that read codons beginning with uridine. The sequence is that of tRNA-2-methylthio-N(6)-dimethylallyladenosine synthase from Shewanella baltica (strain OS185).